A 1039-amino-acid polypeptide reads, in one-letter code: MSERAKLQKKKKVTEDLLDSLLLLPPWRNFAISQSHQSIIESSSQRLPEKMRIDENEGVSASSKHLVFAYYVTGHGFGHATRVVEVVRHLIAAGHDVHVVTGAPDFVFTSEIQSPRLKIRKVLLDCGAVQADALTVDRLASLEKYVETAVVPRAEILETEVEWLHSIKADFVVSDVVPVACRAAADAGIRSVCVTNFSWDFIYAEYVMAAGYHHRSIVWQIAEDYSHCEFLIRLPGYCPMPAFRDVIDVPLVVRRLHKSRKEVRKELGIAEDVNVVILNFGGQPSGWNLKETSLPTGWLCLVCGASETLELPPNFIKLAKDAYTPDIIAASDCMLGKIGYGTVSEALSYKVPFVFVRRDYFNEEPFLRNMLEFYQCGVEMIRRDLLMGQWTPYLERAVSLKPCYEGGINGGEIAAHILQETAIGRHCASDKLSGARRLRDAIILGYQLQRVPGRDIAIPEWYSRAENELGQSAGSSPTVQANENNSLVESCIDDFDILQGDVQGLSDTCTFLKSLAMLDAIHDSEKSTEKKTVRERKAAGGLFNWEEEIFVARAPGRLDVMGGIADYSGSLVLQMPIREACHVAVQRNLPGKHRLWKHAQARQQAKGQVPTPVLQIVSYGSEISNRAPTFDMDLSDFMDGDEPISYEKARKFFAQDPAQKWAAYVAGTILVLMIELGVRFEDSISLLVSSAVPEGKGVSSSAAVEVASMSAIAAAHGLSIDPRDLAILCQKVENHIVGAPCGVMDQMTSSCGEANKLLAMICQPAEVVGLVEIPNHVRFWGIDSGIRHSVGGADYRSVRVGAYMGRKMIKSMASSILSPSASSANGGNPEELEDEGIDLLEAEASLDYLCNLSPHRYEARYADKLPDIMLGQTFIEEYADHDDPVTVIDQKRSYSVKAPARHPIYENFRVKTFKALLTSATSDEQLTALGGLLYQCHYSYSACGLGSDGTNRLVQLVQGMQHNKSNSEDGTLYGAKITGGGSGGTVCVVGRNSLRSSQQILEIQQRYKAATGYLPLIFEGSSPGAGKFGYLRIRRRISL.

Residues alanine 662–valine 678 form a helical membrane-spanning segment. ATP is bound at residue proline 693–alanine 703. The active-site Proton acceptor is aspartate 745.

This sequence belongs to the GHMP kinase family.

Its subcellular location is the membrane. It carries out the reaction L-arabinose + ATP = beta-L-arabinose 1-phosphate + ADP + H(+). Arabinose kinase. Involved in the salvage pathway which converts free L-arabinose to UDP-L-arabinose. May play a role in arabinose transport. This Arabidopsis thaliana (Mouse-ear cress) protein is L-arabinokinase (ARA1).